A 408-amino-acid chain; its full sequence is Imidazolonepropionase (408 aa).

Fe(3+) is bound by residues His73 and His75. Zn(2+) contacts are provided by His73 and His75. Positions 82, 145, and 178 each coordinate 4-imidazolone-5-propanoate. Tyr145 is a binding site for N-formimidoyl-L-glutamate. His243 contacts Fe(3+). His243 lines the Zn(2+) pocket. 4-imidazolone-5-propanoate is bound at residue Gln246. Fe(3+) is bound at residue Asp318. Zn(2+) is bound at residue Asp318. The N-formimidoyl-L-glutamate site is built by Asn320 and Gly322. Ser323 is a binding site for 4-imidazolone-5-propanoate.

Belongs to the metallo-dependent hydrolases superfamily. HutI family. Requires Zn(2+) as cofactor. Fe(3+) serves as cofactor.

Its subcellular location is the cytoplasm. The enzyme catalyses 4-imidazolone-5-propanoate + H2O = N-formimidoyl-L-glutamate. Its pathway is amino-acid degradation; L-histidine degradation into L-glutamate; N-formimidoyl-L-glutamate from L-histidine: step 3/3. Functionally, catalyzes the hydrolytic cleavage of the carbon-nitrogen bond in imidazolone-5-propanoate to yield N-formimidoyl-L-glutamate. It is the third step in the universal histidine degradation pathway. The polypeptide is Imidazolonepropionase (Shewanella piezotolerans (strain WP3 / JCM 13877)).